Consider the following 250-residue polypeptide: tRNA (guanine-N(1)-)-methyltransferase (250 aa).

S-adenosyl-L-methionine-binding positions include G108 and 127–132 (LGDFVL).

This sequence belongs to the RNA methyltransferase TrmD family. Homodimer.

The protein resides in the cytoplasm. It carries out the reaction guanosine(37) in tRNA + S-adenosyl-L-methionine = N(1)-methylguanosine(37) in tRNA + S-adenosyl-L-homocysteine + H(+). In terms of biological role, specifically methylates guanosine-37 in various tRNAs. The chain is tRNA (guanine-N(1)-)-methyltransferase from Streptococcus agalactiae serotype Ia (strain ATCC 27591 / A909 / CDC SS700).